An 883-amino-acid chain; its full sequence is Glutamate receptor 2 (883 aa).

Positions 1–24 (MQKIMHISVLLSPILWGLIFGVSS) are cleaved as a signal peptide. Residues 25-543 (NSIQIGGLFP…GVFSFLDPLA (519 aa)) are Extracellular-facing. A disulfide bridge connects residues Cys78 and Cys330. 4 N-linked (GlcNAc...) asparagine glycosylation sites follow: Asn256, Asn370, Asn406, and Asn413. Pro499, Thr501, and Arg506 together coordinate L-glutamate. Residues 544 to 564 (YEIWMCIVFAYIGVSVVLFLV) traverse the membrane as a helical segment. Residues 565-591 (SRFSPYEWHTEEFEDGRETQSSESTNE) lie on the Cytoplasmic side of the membrane. An intramembrane region (helical; Pore-forming) is located at residues 592 to 607 (FGIFNSLWFSLGAFMR). The stretch at 608–610 (QGC) is an intramembrane region. A lipid anchor (S-palmitoyl cysteine) is attached at Cys610. Residues 611–616 (DISPRS) are Cytoplasmic-facing. Residues 617–637 (LSGRIVGGVWWFFTLIIISSY) traverse the membrane as a helical segment. The Extracellular segment spans residues 638-812 (TANLAAFLTV…EKTSALSLSN (175 aa)). 2 residues coordinate L-glutamate: Ser675 and Thr676. Ser683 is modified (phosphoserine; by PKC). At Ser717 the chain carries Phosphoserine; by PKG. Residue Glu726 participates in L-glutamate binding. A disulfide bridge links Cys739 with Cys794. A helical transmembrane segment spans residues 813–833 (VAGVFYILVGGLGLAMLVALI). The Cytoplasmic portion of the chain corresponds to 834 to 883 (EFCYKSRAEAKRMKVAKNAQNINPSSSQNSQNFATYKEGYNVYGIESVKI). A lipid anchor (S-palmitoyl cysteine) is attached at Cys836. Ser860 and Ser863 each carry phosphoserine. The interval 867 to 877 (ATYKEGYNVYG) is required for interaction with IQSEC1. Position 876 is a phosphotyrosine (Tyr876). Phosphoserine is present on Ser880.

The protein belongs to the glutamate-gated ion channel (TC 1.A.10.1) family. GRIA2 subfamily. As to quaternary structure, homotetramer or heterotetramer of pore-forming glutamate receptor subunits. Tetramers may be formed by the dimerization of dimers. May interact with MPP4. Forms a ternary complex with GRIP1 and CSPG4. Interacts with ATAD1 in an ATP-dependent manner. ATAD1-catalyzed ATP hydrolysis disrupts binding to ATAD1 and to GRIP1 and leads to AMPAR complex disassembly. Interacts with GRIP1 and GRIP2. Interacts with NSF via its C-terminus. Isoform 1, but not isoform 3, interacts with PICK1. Interacts with CACNG2. Interacts with GRIA1 and SYNDIG1. Part of a complex containing GRIA2, NSF and NAPA and/or NAPB. Interacts with SNX27 (via PDZ domain); the interaction is required for recycling to the plasma membrane when endocytosed and prevent degradation in lysosomes. Interacts with LRFN1. Found in a complex with GRIA1, GRIA3, GRIA4, CNIH2, CNIH3, CACNG2, CACNG3, CACNG4, CACNG5, CACNG7 and CACNG8. Interacts with CACNG5. Interacts with OLFM2. Interacts with AP4B1, AP4E1 and AP4M1; probably indirect it mediates the somatodendritic localization of GRIA2 in neurons. Forms a complex with GRIP1, NSG1 and STX12; controls the intracellular fate of AMPAR and the endosomal sorting of the GRIA2 subunit toward recycling and membrane targeting. Interacts with IQSEC1; the interaction is required for ARF6 activation. Interacts (heterotetramer form) with CNIH2 and CNIH3; this interaction promotes expression at the plasma membrane and extensively modulates their gating properties by slowing deactivation and desensitization kinetics. Phosphorylation at Tyr-876 is required for interaction with IQSEC1 and ARF6 activation, which in turn triggers AMPAR internalization for persistent synaptic depression. Post-translationally, palmitoylated. Depalmitoylated upon L-glutamate stimulation. ZDHHC3/GODZ specifically palmitoylates Cys-610, which leads to Golgi retention and decreased cell surface expression. In contrast, Cys-836 palmitoylation does not affect cell surface expression but regulates stimulation-dependent endocytosis. In terms of processing, N-glycosylated. Ubiquitinated by RNF167, leading to its degradation.

The protein localises to the cell membrane. Its subcellular location is the postsynaptic cell membrane. It is found in the postsynaptic density membrane. It carries out the reaction Ca(2+)(in) = Ca(2+)(out). The catalysed reaction is Na(+)(in) = Na(+)(out). Functionally, ionotropic glutamate receptor that functions as a ligand-gated cation channel, gated by L-glutamate and glutamatergic agonists such as alpha-amino-3-hydroxy-5-methyl-4-isoxazolepropionic acid (AMPA), quisqualic acid, and kainic acid. L-glutamate acts as an excitatory neurotransmitter at many synapses in the central nervous system and plays an important role in fast excitatory synaptic transmission. Binding of the excitatory neurotransmitter L-glutamate induces a conformation change, leading to the opening of the cation channel, and thereby converts the chemical signal to an electrical impulse upon entry of monovalent and divalent cations such as sodium and calcium. The receptor then desensitizes rapidly and enters in a transient inactive state, characterized by the presence of bound agonist. In the presence of CACNG4 or CACNG7 or CACNG8, shows resensitization which is characterized by a delayed accumulation of current flux upon continued application of L-glutamate. Through complex formation with NSG1, GRIP1 and STX12 controls the intracellular fate of AMPAR and the endosomal sorting of the GRIA2 subunit toward recycling and membrane targeting. This is Glutamate receptor 2 from Macaca fascicularis (Crab-eating macaque).